The following is a 145-amino-acid chain: Large ribosomal subunit protein uL13 (145 aa).

This sequence belongs to the universal ribosomal protein uL13 family. Part of the 50S ribosomal subunit. Interacts weakly with proteins L3 and L6.

This protein is one of the early assembly proteins of the 50S ribosomal subunit. Binds to 23S rRNA. The chain is Large ribosomal subunit protein uL13 from Haloarcula marismortui (strain ATCC 43049 / DSM 3752 / JCM 8966 / VKM B-1809) (Halobacterium marismortui).